A 362-amino-acid chain; its full sequence is MGNTFGHLFRITTFGESHGGGVGVVIDGCPPRLEISESDIQYDLDRRRPGQSKITTPRHESDTCEIISGVFEGKTLGTPIAILVRNKDQRSQDYDEMSVKLRPSHADATYEAKYGIRNWQGGGRSSARETIGRVAAGAIAKKILKQVANVEIIGYVKRIKDLEGMVDPSTVTLENVESNIVRCPDPEMAEKMIDLIDQTRRNKDSIGGVVECVARNIPKGLGQPVFDKLEADLAKGVMSLPASKGFEIGSGFAGTLLTGSEHNDEFYLDETGEIRTTTNRSGGIQGGISNGENIIIRVAFKPTATIGKEQKTVTNTGEETTLAAKGRHDPCVLPRAVPMVEAMVALVLCDHLLRQEGQCGLF.

Arg47 lines the NADP(+) pocket. FMN-binding positions include 124 to 126, Gly286, 301 to 305, and Arg327; these read RSS and KPTAT.

It belongs to the chorismate synthase family. Homotetramer. FMNH2 serves as cofactor.

The enzyme catalyses 5-O-(1-carboxyvinyl)-3-phosphoshikimate = chorismate + phosphate. It participates in metabolic intermediate biosynthesis; chorismate biosynthesis; chorismate from D-erythrose 4-phosphate and phosphoenolpyruvate: step 7/7. Functionally, catalyzes the anti-1,4-elimination of the C-3 phosphate and the C-6 proR hydrogen from 5-enolpyruvylshikimate-3-phosphate (EPSP) to yield chorismate, which is the branch point compound that serves as the starting substrate for the three terminal pathways of aromatic amino acid biosynthesis. This reaction introduces a second double bond into the aromatic ring system. The protein is Chorismate synthase of Rippkaea orientalis (strain PCC 8801 / RF-1) (Cyanothece sp. (strain PCC 8801)).